The chain runs to 365 residues: Zinc finger protein lsy-2 (365 aa).

The interval 1–36 is disordered; it reads MLTRRNAKQSQRNSADQSLSEFNSSSMTHGSNQSVY. The span at 8-36 shows a compositional bias: polar residues; it reads KQSQRNSADQSLSEFNSSSMTHGSNQSVY. 5 C2H2-type zinc fingers span residues 78-100, 106-128, 134-156, 264-287, and 296-318; these read HQCNVCNKIFVSYKGLQQHAVIH, FRCDICSKSFRFKSNLFEHRSVH, HACPYCGKTCRLKGNLKKHLRTH, HDCPVCKSQFMTRMDCVSHHTLEH, and FFCEKCYRPFADEASYNQHMSYH.

It localises to the nucleus speckle. Involved in transcriptional regulation. Required to specify left-right asymmetry of the ASE gustatory neurons, probably acting upstream of microRNA lsy-6. Involved in maintaining the distinction between somatic and germ cells, perhaps acting by repressing germ cell-specific genes in somatic cells. The polypeptide is Zinc finger protein lsy-2 (Caenorhabditis elegans).